Consider the following 116-residue polypeptide: M-zodatoxin-Lt6a/b (116 aa).

A signal peptide spans 1 to 22; the sequence is MKYFVVALTLAVAFVCIEECKT. 2 propeptides span residues 23–44 and 80–83; these read VEIG…EEAR and EEAR. 2 consecutive short sequence motifs (processing quadruplet motif) follow at residues 41 to 44 and 80 to 83; these read EEAR. Position 84 is a pyrrolidone carboxylic acid (Gln84).

The protein belongs to the cationic peptide 03 (latarcin) family. 06 subfamily. Post-translationally, cleavage of the propeptide depends on the processing quadruplet motif (XXXR, with at least one of X being E). Expressed by the venom gland.

It is found in the secreted. Does not have antimicrobial activity against neither Gram-positive bacteria (A.globiformis VKM Ac-1112 (MIC&gt;70 uM), and B.subtilis VKM B-501 (MIC&gt;70 uM)), nor Gram-negative bacteria (E.coli DH5-alpha (MIC&gt;70 uM), E.coli MH1 (MIC&gt;70 uM), and P.aeruginosa PAO1 (MIC&gt;70 uM)), nor yeasts (P.pastoris GS115 (MIC&gt;70 uM), and S.cerevisiae Y190 (MIC&gt;70 uM)). Does not have hemolytic activity against rabbit erythrocytes. However, it causes some conductance changes in planar bilayer membranes, without membrane rupture, suggesting a cytolytic function on other biological targets. It causes paralysis, but is not lethal when injected into insect (M.domestica) larvae. This is M-zodatoxin-Lt6a/b from Lachesana tarabaevi (Spider).